A 159-amino-acid polypeptide reads, in one-letter code: 6,7-dimethyl-8-ribityllumazine synthase (159 aa).

5-amino-6-(D-ribitylamino)uracil is bound by residues Phe-23, 61-63 (SFE), and 85-87 (AVI). A (2S)-2-hydroxy-3-oxobutyl phosphate-binding site is contributed by 90 to 91 (DT). The active-site Proton donor is His-93. Phe-118 lines the 5-amino-6-(D-ribitylamino)uracil pocket. (2S)-2-hydroxy-3-oxobutyl phosphate is bound at residue Arg-132.

The protein belongs to the DMRL synthase family.

The catalysed reaction is (2S)-2-hydroxy-3-oxobutyl phosphate + 5-amino-6-(D-ribitylamino)uracil = 6,7-dimethyl-8-(1-D-ribityl)lumazine + phosphate + 2 H2O + H(+). Its pathway is cofactor biosynthesis; riboflavin biosynthesis; riboflavin from 2-hydroxy-3-oxobutyl phosphate and 5-amino-6-(D-ribitylamino)uracil: step 1/2. In terms of biological role, catalyzes the formation of 6,7-dimethyl-8-ribityllumazine by condensation of 5-amino-6-(D-ribitylamino)uracil with 3,4-dihydroxy-2-butanone 4-phosphate. This is the penultimate step in the biosynthesis of riboflavin. The sequence is that of 6,7-dimethyl-8-ribityllumazine synthase from Synechococcus sp. (strain RCC307).